Consider the following 372-residue polypeptide: Putative 26S proteasome regulatory subunit homolog MTH_1011 (372 aa).

164 to 171 (GSPGTGKT) lines the ATP pocket.

The protein belongs to the AAA ATPase family.

In terms of biological role, the 26S proteasome is involved in the ATP-dependent degradation of ubiquitinated proteins. The regulatory (or ATPase) complex confers ATP dependency and substrate specificity to the 26S complex. This chain is Putative 26S proteasome regulatory subunit homolog MTH_1011, found in Methanothermobacter thermautotrophicus (strain ATCC 29096 / DSM 1053 / JCM 10044 / NBRC 100330 / Delta H) (Methanobacterium thermoautotrophicum).